A 155-amino-acid polypeptide reads, in one-letter code: Protein Smg homolog (155 aa).

This sequence belongs to the Smg family.

This Methylococcus capsulatus (strain ATCC 33009 / NCIMB 11132 / Bath) protein is Protein Smg homolog.